The chain runs to 327 residues: PDZ and LIM domain protein 1 (327 aa).

Thr2 bears the N-acetylthreonine mark. Residues 3-85 (TQQIVLQGPG…NMTLTVSRSE (83 aa)) enclose the PDZ domain. Phosphoserine occurs at positions 90 and 130. Residue Tyr142 is modified to Phosphotyrosine. A disordered region spans residues 161 to 186 (VESKTSASGEEANSRPSAQPHPSGGL). The LIM zinc-binding domain maps to 256 to 315 (PICDKCGTGIVGVFVKLRDHHRHPECYVCTDCGINLKQKGHFFVGDQIYCEKHARERVTP). Positions 258, 261, 278, 281, 284, 287, 305, and 308 each coordinate Zn(2+). A Phosphothreonine modification is found at Thr314. Position 319 is a phosphotyrosine (Tyr319).

As to quaternary structure, interacts with ACTN1. Interacts with ACTN2 and ACTN4. Interacts with PDLIM4. In terms of tissue distribution, expressed most abundantly in heart, lung and liver, moderately in spleen and skeletal muscle, and at extremely low levels (if at all) in testis and brain tissues.

Its subcellular location is the cytoplasm. The protein localises to the cytoskeleton. It is found in the myofibril. The protein resides in the sarcomere. It localises to the z line. Cytoskeletal protein that may act as an adapter that brings other proteins (like kinases) to the cytoskeleton. Involved in assembly, disassembly and directioning of stress fibers in fibroblasts. Required for the localization of ACTN1 and PALLD to stress fibers. Required for cell migration and in maintaining cell polarity of fibroblasts. The polypeptide is PDZ and LIM domain protein 1 (Pdlim1) (Rattus norvegicus (Rat)).